The chain runs to 355 residues: UDP-N-acetylglucosamine--N-acetylmuramyl-(pentapeptide) pyrophosphoryl-undecaprenol N-acetylglucosamine transferase (355 aa).

UDP-N-acetyl-alpha-D-glucosamine is bound by residues 13–15 (TGG), asparagine 125, arginine 162, serine 190, isoleucine 244, and glutamine 289.

It belongs to the glycosyltransferase 28 family. MurG subfamily.

It localises to the cell inner membrane. The enzyme catalyses di-trans,octa-cis-undecaprenyl diphospho-N-acetyl-alpha-D-muramoyl-L-alanyl-D-glutamyl-meso-2,6-diaminopimeloyl-D-alanyl-D-alanine + UDP-N-acetyl-alpha-D-glucosamine = di-trans,octa-cis-undecaprenyl diphospho-[N-acetyl-alpha-D-glucosaminyl-(1-&gt;4)]-N-acetyl-alpha-D-muramoyl-L-alanyl-D-glutamyl-meso-2,6-diaminopimeloyl-D-alanyl-D-alanine + UDP + H(+). Its pathway is cell wall biogenesis; peptidoglycan biosynthesis. Cell wall formation. Catalyzes the transfer of a GlcNAc subunit on undecaprenyl-pyrophosphoryl-MurNAc-pentapeptide (lipid intermediate I) to form undecaprenyl-pyrophosphoryl-MurNAc-(pentapeptide)GlcNAc (lipid intermediate II). The protein is UDP-N-acetylglucosamine--N-acetylmuramyl-(pentapeptide) pyrophosphoryl-undecaprenol N-acetylglucosamine transferase of Neisseria meningitidis serogroup A / serotype 4A (strain DSM 15465 / Z2491).